Reading from the N-terminus, the 142-residue chain is Large ribosomal subunit protein uL11 (142 aa).

Belongs to the universal ribosomal protein uL11 family. As to quaternary structure, part of the ribosomal stalk of the 50S ribosomal subunit. Interacts with L10 and the large rRNA to form the base of the stalk. L10 forms an elongated spine to which L12 dimers bind in a sequential fashion forming a multimeric L10(L12)X complex. In terms of processing, one or more lysine residues are methylated.

Its function is as follows. Forms part of the ribosomal stalk which helps the ribosome interact with GTP-bound translation factors. The sequence is that of Large ribosomal subunit protein uL11 from Shewanella oneidensis (strain ATCC 700550 / JCM 31522 / CIP 106686 / LMG 19005 / NCIMB 14063 / MR-1).